The following is a 93-amino-acid chain: Small ribosomal subunit protein uS19 (93 aa).

Belongs to the universal ribosomal protein uS19 family.

Its function is as follows. Protein S19 forms a complex with S13 that binds strongly to the 16S ribosomal RNA. This Campylobacter concisus (strain 13826) protein is Small ribosomal subunit protein uS19.